The chain runs to 474 residues: Pyoverdine export outer membrane protein OpmQ (474 aa).

The N-terminal stretch at 1 to 17 is a signal peptide; it reads MSMKNLSLISACLLLGA. C18 carries N-palmitoyl cysteine lipidation. Residue C18 is the site of S-diacylglycerol cysteine attachment.

It belongs to the outer membrane factor (OMF) (TC 1.B.17) family. As to quaternary structure, part of the tripartite efflux system PvdRT-OpmQ, which is composed of an inner membrane component with both ATPase and permease domains, PvdT, a periplasmic membrane fusion protein, PvdR, and an outer membrane component, OpmQ.

It is found in the cell outer membrane. In terms of biological role, part of the tripartite efflux system PvdRT-OpmQ required for the secretion into the extracellular milieu of the siderophore pyoverdine (PVD), which is involved in iron acquisition. The system is responsible for export of newly synthesized PVD after the final steps of biosynthesis have taken place in the periplasm. It is also responsible for recycling of PVD after internalization of ferri-PVD into the periplasm by the outer-membrane receptor FpvA and release of iron from PVD, thus making PVD available for new cycles of iron uptake. In addition, can expel unwanted metals complexed with PVD from the periplasm into the extracellular medium. This is Pyoverdine export outer membrane protein OpmQ from Pseudomonas aeruginosa (strain ATCC 15692 / DSM 22644 / CIP 104116 / JCM 14847 / LMG 12228 / 1C / PRS 101 / PAO1).